Here is a 1159-residue protein sequence, read N- to C-terminus: MSMGRSSSTTFRNRTASHGSRSLGSAETARIPRKLSSQLSHTHANILHPQLQTMMEQWQMRERPSLETENGKGSLLLSSEGVADMIVLSSFGEVISVVFPWFLANVRTSFDIKLSEFKHQLFEQIGPMKWGKHSTQPQDYAFRQLNNFGEIEVIFNDDQQLSCLELHGTFPMLFLFEPDGFNRDKELMCDISHCLGYSLDKLEESIDEELRQFRASLWTQTKKTCFERGVDGVDHYAFPEEQYFCVGEKCPTDLESKVKAAKLDYQLFWTKRKSEANEVWEKMYKITIDFDPEFNPQSLMRMFVKELQCMNLFDPEDPPDEEWILQLAGRTSFVTRPEISLVSYDGIRSELESYRCPGFVVRRKSLVLKDYVRPKPLYEPHYVRVHERKMALDVLSVSIGTEVKHSGNSDKVWTDFRPTASLEQITLWDLDSNLMIRPVNVTGLPFTASHDIYLGMEFKVYVGTLTLATIKIPRVPTTKLVWKREFFTFDLYMKDMPPSAILSVRVYSMKTTKMKEEIELGWVNISLSDWRDELRQGQIKLNLWGPEPSANRSRIGHNGAKIGTSLSVTVEISSHGRRVKMPNEAQYKYLVDHRISWSDTVEIVGDDYEACIGDPGYKKLQDLVKKHESGVILDDSEQRHVWSWRNYIQKQEPDLLVVLSELRIVWTDRENFSELYVMLETWKAPSVAAALTLLGKRCTDRVIRKFAVNKLNDQLSQFNVHLFLLPLIQALKYEPRAYSEVGMMLLTRALSSYRIGHRLFWLLRSEICRLKDCATNNEEYRRISLLMEAYLRGNEEHIKGIIRQVDMVDELTRISSLVKGLSKEAAREKLRDQLRTISHKMESIDSPLDPVYKFGEMVIEKAIVLGSAKQPLRLVWKNKNPKSDLHLPFCEVIFKNGDDLRQDMLVLQVLEVMDTIWKAANIDCCLSPYGVLPMGEMIGIIEVVPNCKTIFEIQHKAGLVNTAARSVDSNFMNKWIRKQCGFVDEKKKYKKGGGPTVDSAQATKKYFESVDRFLYSCVGYSVATYIMGIKDRHSDNLMLTEDGKYFHIDFGHILGHGKTKLGIQRDRQPFILTEQFLTIIRSGKPVDGNSHEIQKFKTLCLEAYEVMWNNLKYKFQKTLCCKGETKEKARKFFAGVYEEAFNGSWSTKTNWLFHAMKHY.

Positions 1-25 (MSMGRSSSTTFRNRTASHGSRSLGS) are enriched in polar residues. Residues 1–28 (MSMGRSSSTTFRNRTASHGSRSLGSAET) form a disordered region. Positions 79–179 (SEGVADMIVL…FPMLFLFEPD (101 aa)) constitute a PI3K-ABD domain. A PI3K-RBD domain is found at 272–363 (RKSEANEVWE…YRCPGFVVRR (92 aa)). One can recognise a C2 PI3K-type domain in the interval 430–588 (LDSNLMIRPV…VKMPNEAQYK (159 aa)). Residues 607 to 793 (DYEACIGDPG…SLLMEAYLRG (187 aa)) form the PIK helical domain. The PI3K/PI4K catalytic domain maps to 858–1159 (VIEKAIVLGS…NWLFHAMKHY (302 aa)). The segment at 864–870 (VLGSAKQ) is G-loop. The catalytic loop stretch occupies residues 1028–1036 (GIKDRHSDN). The activation loop stretch occupies residues 1047–1073 (HIDFGHILGHGKTKLGIQRDRQPFILT).

Belongs to the PI3/PI4-kinase family.

It carries out the reaction a 1,2-diacyl-sn-glycero-3-phospho-(1D-myo-inositol) + ATP = a 1,2-diacyl-sn-glycero-3-phospho-(1D-myo-inositol-3-phosphate) + ADP + H(+). In terms of biological role, phosphatidylinositol 3-kinase homolog that regulates longevity and diapause. Promotes cell survival during embryonic development by recruiting akt-1/2 to the plasma membrane through the production of PtdIns(3,4,5)P3. Could function in the development or neuroendocrine signaling of the dauer pathway. Mediates susceptibility to enteropathogenic E.coli infection. May negatively regulate AYI interneuron neurite outgrowth. Plays a role in aversive olfactory learning when an odor is associated with food deprivation. Regulates this process by promoting the nuclear relocalization of egl-4 in AWC olfactory neurons after odor conditioning. In Caenorhabditis briggsae, this protein is Phosphatidylinositol 3-kinase age-1 (age-1).